Consider the following 167-residue polypeptide: S-ribosylhomocysteine lyase (167 aa).

Fe cation contacts are provided by His-54, His-58, and Cys-128.

The protein belongs to the LuxS family. Homodimer. Requires Fe cation as cofactor.

The catalysed reaction is S-(5-deoxy-D-ribos-5-yl)-L-homocysteine = (S)-4,5-dihydroxypentane-2,3-dione + L-homocysteine. Its function is as follows. Involved in the synthesis of autoinducer 2 (AI-2) which is secreted by bacteria and is used to communicate both the cell density and the metabolic potential of the environment. The regulation of gene expression in response to changes in cell density is called quorum sensing. Catalyzes the transformation of S-ribosylhomocysteine (RHC) to homocysteine (HC) and 4,5-dihydroxy-2,3-pentadione (DPD). This Haemophilus influenzae (strain PittGG) protein is S-ribosylhomocysteine lyase.